Reading from the N-terminus, the 938-residue chain is Histone deacetylase 7 (938 aa).

Residues methionine 1–alanine 40 are disordered. The interaction with MEF2C stretch occupies residues methionine 1–glutamine 121. Transcription repression stretches follow at residues histidine 2–arginine 254 and glycine 241–glycine 533. The interaction with MEF2A stretch occupies residues serine 72–proline 172. Phosphoserine is present on serine 132. Disordered stretches follow at residues serine 155–leucine 280, serine 331–glutamine 361, leucine 373–leucine 463, and arginine 472–glutamate 491. Serine 178 is modified (phosphoserine; by MARK2, MARK3 and PKD/PRKD1). The segment covering lysine 190–serine 204 has biased composition (basic and acidic residues). Serine 204 is modified (phosphoserine; by PKD/PRKD2). Low complexity predominate over residues serine 220–proline 235. A Phosphoserine; by PKD/PRKD1 modification is found at serine 344. Phosphoserine occurs at positions 350 and 398. The segment covering serine 350–glutamine 361 has biased composition (low complexity). 2 stretches are compositionally biased toward low complexity: residues glycine 429–histidine 448 and serine 479–glutamate 491. Phosphoserine; by PKD/PRKD1 is present on serine 479. Serine 480 is subject to Phosphoserine. The interval proline 505–aspartate 852 is histone deacetylase. Residues cysteine 520, cysteine 522, and histidine 528 each coordinate Zn(2+). Residue serine 582 is modified to Phosphoserine. Cysteine 605 serves as a coordination point for Zn(2+). The active site involves histidine 657. An interaction with SIN3A region spans residues asparagine 864–leucine 938. The Nuclear export signal signature appears at alanine 904 to leucine 938.

Belongs to the histone deacetylase family. HD type 2 subfamily. As to quaternary structure, interacts with HDAC1, HDAC2, HDAC3, HDAC4, HDAC5, NCOR1, NCOR2, SIN3A, SIN3B, RBBP4, RBBP7, MTA1L1, SAP30 and MBD3. Interacts with KAT5 and EDNRA. Interacts with the 14-3-3 protein YWHAE, MEF2A, MEF2B and MEF2C. Interacts with ZMYND15. Interacts with KDM5B. Interacts with PML. Interacts with FOXP3. Interacts with RARA. In terms of processing, may be phosphorylated by CaMK1. Phosphorylated by the PKC kinases PKN1 and PKN2, impairing nuclear import. Phosphorylation at Ser-178 by MARK2, MARK3 and PRKD1 promotes interaction with 14-3-3 proteins and export from the nucleus. Phosphorylation at Ser-178 is a prerequisite for phosphorylation at Ser-204. In terms of tissue distribution, highly expressed in heart and lung. Expressed at intermediate level in muscle.

The protein localises to the nucleus. The protein resides in the cytoplasm. The catalysed reaction is N(6)-acetyl-L-lysyl-[histone] + H2O = L-lysyl-[histone] + acetate. It catalyses the reaction N(6)-acetyl-L-lysyl-[protein] + H2O = L-lysyl-[protein] + acetate. Its activity is inhibited by Trichostatin A (TSA), a known histone deacetylase inhibitor. Responsible for the deacetylation of lysine residues on the N-terminal part of the core histones (H2A, H2B, H3 and H4). Histone deacetylation gives a tag for epigenetic repression and plays an important role in transcriptional regulation, cell cycle progression and developmental events. Histone deacetylases act via the formation of large multiprotein complexes. Involved in muscle maturation by repressing transcription of myocyte enhancer factors such as MEF2A, MEF2B and MEF2C. During muscle differentiation, it shuttles into the cytoplasm, allowing the expression of myocyte enhancer factors. Positively regulates the transcriptional repressor activity of FOXP3. Serves as a corepressor of RARA, causing its deacetylation and inhibition of RARE DNA element binding. In association with RARA, plays a role in the repression of microRNA-10a and thereby in the inflammatory response. Also acetylates non-histone proteins, such as ALKBH5. This is Histone deacetylase 7 (Hdac7) from Mus musculus (Mouse).